We begin with the raw amino-acid sequence, 1037 residues long: PH and SEC7 domain-containing protein 3 (1037 aa).

Residues 37-70 (EEKTPDSSDHGGSTLLPPTVTNEFPEYGTMEEGG) are disordered. Serine 76 is modified (phosphoserine). Disordered stretches follow at residues 169–189 (TASHKPQRAHRTFPVGPGKSP), 236–255 (RVPESACPVSSSSAGSHNPV), 262–284 (REQRSDLGREHPRGYDRGGSMGR), 304–335 (EAESRHPPERTASPVSKEFAKRPSHSSPACGV), and 353–375 (APSERPGTSAGTLSPMPLGESGE). The segment covering 237–251 (VPESACPVSSSSAGS) has biased composition (low complexity). The segment covering 262 to 277 (REQRSDLGREHPRGYD) has biased composition (basic and acidic residues). Residues 515-723 (NSVYTRGPQE…KALYNSIKNE (209 aa)) form the SEC7 domain. Residues 730–747 (DDEEKKKSPSEGTDEKAN) show a composition bias toward basic and acidic residues. Residues 730-762 (DDEEKKKSPSEGTDEKANGTHPKTISRIGSTTN) form a disordered region. The span at 750 to 762 (HPKTISRIGSTTN) shows a compositional bias: polar residues. The residue at position 759 (serine 759) is a Phosphoserine. The PH domain maps to 774-887 (AVYKSGFLAR…WINKINCVAA (114 aa)). Residues 911-941 (ATTTKLSQEEQLKSHESKLKQITTELAEHRS) adopt a coiled-coil conformation. A disordered region spans residues 984-1037 (LLTTDGNEPVGLKKSHSSPSLNPDASPVTAKVKRNVSERKDHRPETPGIKQKVT). Phosphoserine occurs at positions 998, 1000, 1001, 1003, and 1009. The span at 1018–1028 (NVSERKDHRPE) shows a compositional bias: basic and acidic residues.

Ubiquitously expressed, with highest levels in liver. Present in brain, with highest levels in olfactory bulb, cortex, hippocampal pyramidal cell layer and cerebellar granule cell layer (at protein level).

The protein localises to the cell membrane. It is found in the cell projection. It localises to the ruffle membrane. Its subcellular location is the postsynaptic density. Guanine nucleotide exchange factor for ARF6. The polypeptide is PH and SEC7 domain-containing protein 3 (Psd3) (Mus musculus (Mouse)).